A 392-amino-acid chain; its full sequence is Galactokinase (392 aa).

4 residues coordinate alpha-D-galactose: Arg37, Glu43, His44, and Asp46. Residues Gly136, Gly138, Ser140, and Ser141 each contribute to the ATP site. Position 186 (Asp186) interacts with alpha-D-galactose. The Proton acceptor role is filled by Asp186. Ser230 carries the phosphoserine modification. Tyr236 lines the alpha-D-galactose pocket.

It belongs to the GHMP kinase family. GalK subfamily. Homodimer.

It catalyses the reaction alpha-D-galactose + ATP = alpha-D-galactose 1-phosphate + ADP + H(+). It functions in the pathway carbohydrate metabolism; galactose metabolism. Its function is as follows. Catalyzes the transfer of a phosphate from ATP to alpha-D-galactose and participates in the first committed step in the catabolism of galactose. This is Galactokinase (Galk1) from Mus musculus (Mouse).